Here is a 1556-residue protein sequence, read N- to C-terminus: Pentafunctional AROM polypeptide (1556 aa).

Residues methionine 1 to aspartate 387 are 3-dehydroquinate synthase. Residues aspartate 46–asparagine 48, glutamate 84–lysine 87, glycine 115–valine 117, and aspartate 120 contribute to the NAD(+) site. Arginine 131 serves as a coordination point for 7-phospho-2-dehydro-3-deoxy-D-arabino-heptonate. Position 140–141 (threonine 140–threonine 141) interacts with NAD(+). Residues aspartate 147 and lysine 153 each coordinate 7-phospho-2-dehydro-3-deoxy-D-arabino-heptonate. Lysine 162 provides a ligand contact to NAD(+). Asparagine 163 is a 7-phospho-2-dehydro-3-deoxy-D-arabino-heptonate binding site. Residues phenylalanine 180 to threonine 183 and asparagine 191 each bind NAD(+). Residue glutamate 195 coordinates Zn(2+). 7-phospho-2-dehydro-3-deoxy-D-arabino-heptonate is bound by residues glutamate 195–lysine 198 and lysine 253. Glutamate 263 serves as the catalytic Proton acceptor; for 3-dehydroquinate synthase activity. 7-phospho-2-dehydro-3-deoxy-D-arabino-heptonate-binding positions include arginine 267–asparagine 271 and histidine 274. Histidine 274 is a binding site for Zn(2+). Histidine 278 serves as the catalytic Proton acceptor; for 3-dehydroquinate synthase activity. The 7-phospho-2-dehydro-3-deoxy-D-arabino-heptonate site is built by histidine 290 and lysine 359. A Zn(2+)-binding site is contributed by histidine 290. The EPSP synthase stretch occupies residues valine 400–valine 837. The For EPSP synthase activity role is filled by cysteine 819. The shikimate kinase stretch occupies residues proline 858–serine 1049. Glycine 864–threonine 871 is an ATP binding site. The 3-dehydroquinase stretch occupies residues leucine 1050–glutamate 1266. The active-site Proton acceptor; for 3-dehydroquinate dehydratase activity is the histidine 1171. The active-site Schiff-base intermediate with substrate; for 3-dehydroquinate dehydratase activity is the lysine 1200. Residues lysine 1279–asparagine 1556 form a shikimate dehydrogenase region.

In the N-terminal section; belongs to the sugar phosphate cyclases superfamily. Dehydroquinate synthase family. This sequence in the 2nd section; belongs to the EPSP synthase family. It in the 3rd section; belongs to the shikimate kinase family. The protein in the 4th section; belongs to the type-I 3-dehydroquinase family. In the C-terminal section; belongs to the shikimate dehydrogenase family. In terms of assembly, homodimer. The cofactor is Zn(2+).

The protein resides in the cytoplasm. The catalysed reaction is 7-phospho-2-dehydro-3-deoxy-D-arabino-heptonate = 3-dehydroquinate + phosphate. It carries out the reaction 3-dehydroquinate = 3-dehydroshikimate + H2O. The enzyme catalyses shikimate + NADP(+) = 3-dehydroshikimate + NADPH + H(+). It catalyses the reaction shikimate + ATP = 3-phosphoshikimate + ADP + H(+). The catalysed reaction is 3-phosphoshikimate + phosphoenolpyruvate = 5-O-(1-carboxyvinyl)-3-phosphoshikimate + phosphate. Its pathway is metabolic intermediate biosynthesis; chorismate biosynthesis; chorismate from D-erythrose 4-phosphate and phosphoenolpyruvate: step 2/7. It functions in the pathway metabolic intermediate biosynthesis; chorismate biosynthesis; chorismate from D-erythrose 4-phosphate and phosphoenolpyruvate: step 3/7. It participates in metabolic intermediate biosynthesis; chorismate biosynthesis; chorismate from D-erythrose 4-phosphate and phosphoenolpyruvate: step 4/7. The protein operates within metabolic intermediate biosynthesis; chorismate biosynthesis; chorismate from D-erythrose 4-phosphate and phosphoenolpyruvate: step 5/7. Its pathway is metabolic intermediate biosynthesis; chorismate biosynthesis; chorismate from D-erythrose 4-phosphate and phosphoenolpyruvate: step 6/7. In terms of biological role, the AROM polypeptide catalyzes 5 consecutive enzymatic reactions in prechorismate polyaromatic amino acid biosynthesis. The polypeptide is Pentafunctional AROM polypeptide (Yarrowia lipolytica (strain CLIB 122 / E 150) (Yeast)).